We begin with the raw amino-acid sequence, 432 residues long: Amino acid transporter ANT1 (432 aa).

A disordered region spans residues 1–30 (MAIKDLTATTGDSSLPLIKSPPSETTGGDR). At 1-35 (MAIKDLTATTGDSSLPLIKSPPSETTGGDRTSALQ) the chain is on the cytoplasmic side. Residues 36–56 (TLGNIIVSIVGTGVLGLPYAF) traverse the membrane as a helical segment. At 57–62 (RIAGWL) the chain is on the lumenal side. A helical membrane pass occupies residues 63–83 (AGSLGVIIVGFATYYCMLLLI). At 84–115 (QCRDKLESEEGEEESKTYGDLGFKCMGTKGRY) the chain is on the cytoplasmic side. A helical membrane pass occupies residues 116-136 (LTEFLIFTAQCGGSVAYLVFI). Topologically, residues 137-147 (GRNLSSIFSSY) are lumenal. The chain crosses the membrane as a helical span at residues 148-168 (GLSMVSFILILVPIEVGLSWI). At 169 to 172 (TSLS) the chain is on the cytoplasmic side. Residues 173 to 193 (ALSPFSIFADICNIIAMCFVV) form a helical membrane-spanning segment. Topologically, residues 194–219 (KENVEMVIEGDFSFSDRTAISSTIGG) are lumenal. Residues 220–240 (LPFAGGVAVFCFEGFAMTLAL) form a helical membrane-spanning segment. The Cytoplasmic segment spans residues 241–256 (ESSMREREAFPKLLAK). The chain crosses the membrane as a helical span at residues 257 to 277 (VLAGITFVYVLFGFCGYMAYG). The Lumenal segment spans residues 278–292 (DQTKDIITLNLPNNW). A helical transmembrane segment spans residues 293-313 (SAIAVQIGLCVGLTFTFPIMV). The Cytoplasmic portion of the chain corresponds to 314–353 (HPLNEIIEQKLKRIDWLQKHHNGYSNETGSVSKFAIFTTR). The chain crosses the membrane as a helical span at residues 354-374 (TLLVVGLAAIASLVPGFGTFA). The Lumenal portion of the chain corresponds to 375–379 (SLVGS). A helical transmembrane segment spans residues 380-400 (TLCALISFVLPASYHLTLLGP). Over 401 to 410 (SLNVWNKSID) the chain is Cytoplasmic. Residues 411–431 (VFIVICGLIFAVYGTYNTIVG) traverse the membrane as a helical segment. Residue valine 432 is a topological domain, lumenal.

Belongs to the amino acid/polyamine transporter 2 family. Amino acid/auxin permease (AAAP) (TC 2.A.18.8) subfamily. As to expression, ubiquitous. Highly expressed in flowers and cauline leaves and at lower levels in stems, leaves and roots.

The protein localises to the endoplasmic reticulum membrane. Its function is as follows. Translocates aromatic and neutral amino acids such as tyrosine, tryptophan, phenylalanine, histidine, proline, leucine, valine, glutamine, as well as arginine. Transports the auxins indole-3-acetic acid (IAA) and 2,4-dichlorophenoxyacetic acid (2,4-D). This Arabidopsis thaliana (Mouse-ear cress) protein is Amino acid transporter ANT1.